Here is a 608-residue protein sequence, read N- to C-terminus: DNA mismatch repair protein MutL (608 aa).

Belongs to the DNA mismatch repair MutL/HexB family.

This protein is involved in the repair of mismatches in DNA. It is required for dam-dependent methyl-directed DNA mismatch repair. May act as a 'molecular matchmaker', a protein that promotes the formation of a stable complex between two or more DNA-binding proteins in an ATP-dependent manner without itself being part of a final effector complex. This is DNA mismatch repair protein MutL from Elusimicrobium minutum (strain Pei191).